The sequence spans 396 residues: uncharacterized protein (396 aa).

K219 is modified (N6-(pyridoxal phosphate)lysine).

Belongs to the class-V pyridoxal-phosphate-dependent aminotransferase family. Pyridoxal 5'-phosphate is required as a cofactor.

It is found in the cytoplasm. The protein localises to the nucleus. This is an uncharacterized protein from Schizosaccharomyces pombe (strain 972 / ATCC 24843) (Fission yeast).